We begin with the raw amino-acid sequence, 359 residues long: Nicotinate-nucleotide--dimethylbenzimidazole phosphoribosyltransferase (359 aa).

Glutamate 318 functions as the Proton acceptor in the catalytic mechanism.

The protein belongs to the CobT family. As to quaternary structure, homodimer.

It catalyses the reaction 5,6-dimethylbenzimidazole + nicotinate beta-D-ribonucleotide = alpha-ribazole 5'-phosphate + nicotinate + H(+). The protein operates within nucleoside biosynthesis; alpha-ribazole biosynthesis; alpha-ribazole from 5,6-dimethylbenzimidazole: step 1/2. Its function is as follows. Catalyzes the synthesis of alpha-ribazole-5'-phosphate from nicotinate mononucleotide (NAMN) and 5,6-dimethylbenzimidazole (DMB). The protein is Nicotinate-nucleotide--dimethylbenzimidazole phosphoribosyltransferase of Escherichia coli O81 (strain ED1a).